The primary structure comprises 214 residues: Cytochrome c biogenesis ATP-binding export protein CcmA (214 aa).

One can recognise an ABC transporter domain in the interval 8–212 (LYAADLACLK…PPTVLDLSEV (205 aa)). Residue 40 to 47 (GPNGFGKT) coordinates ATP.

Belongs to the ABC transporter superfamily. CcmA exporter (TC 3.A.1.107) family. As to quaternary structure, the complex is composed of two ATP-binding proteins (CcmA) and two transmembrane proteins (CcmB).

Its subcellular location is the cell inner membrane. The enzyme catalyses heme b(in) + ATP + H2O = heme b(out) + ADP + phosphate + H(+). Its function is as follows. Part of the ABC transporter complex CcmAB involved in the biogenesis of c-type cytochromes; once thought to export heme, this seems not to be the case, but its exact role is uncertain. Responsible for energy coupling to the transport system. This Aromatoleum aromaticum (strain DSM 19018 / LMG 30748 / EbN1) (Azoarcus sp. (strain EbN1)) protein is Cytochrome c biogenesis ATP-binding export protein CcmA.